The following is a 220-amino-acid chain: uncharacterized protein (220 aa).

The next 7 membrane-spanning stretches (helical) occupy residues Phe6–Trp26, Ile33–Ile53, Ala59–Leu79, Leu103–Leu123, Gly126–Met146, Ala157–Val177, and Leu179–Leu199.

It is found in the cell membrane. This is an uncharacterized protein from Mycobacterium tuberculosis (strain ATCC 25618 / H37Rv).